We begin with the raw amino-acid sequence, 265 residues long: Undecaprenyl-diphosphatase 1 (265 aa).

A run of 7 helical transmembrane segments spans residues 4-24 (IIIA…PISS), 42-62 (AKTF…ILYH), 84-104 (FHVF…HDVI), 108-128 (LFQP…MIFA), 184-204 (SEFS…LDLL), 217-237 (MFAV…VTFL), and 245-265 (LKPF…FVLL).

Belongs to the UppP family.

The protein localises to the cell membrane. It carries out the reaction di-trans,octa-cis-undecaprenyl diphosphate + H2O = di-trans,octa-cis-undecaprenyl phosphate + phosphate + H(+). Functionally, catalyzes the dephosphorylation of undecaprenyl diphosphate (UPP). Confers resistance to bacitracin. This Bacillus thuringiensis (strain Al Hakam) protein is Undecaprenyl-diphosphatase 1.